Reading from the N-terminus, the 203-residue chain is Calcineurin B-like protein 5 (203 aa).

Gly-2 carries N-myristoyl glycine lipidation. 4 EF-hand domains span residues 30–65, 66–101, 103–138, and 147–182; these read EVEV…KNTK, KRSL…FHPN, SPRD…VLEE, and IIDS…YPLT.

Belongs to the calcineurin regulatory subunit family. Homodimer. Interacts with PP2CA, CIPK2, CIPK11, CIPK23 and CIPK24. Post-translationally, both N-myristoylation and calcium-mediated conformational changes are essential for its function. As to expression, expressed in green tissues, but not in the roots.

The protein localises to the cytoplasm. It is found in the nucleus. Functionally, acts as a calcium sensor. CBL proteins interact with CIPK serine-threonine protein kinases. Binding of a CBL protein to the regulatory NAF domain of a CIPK protein lead to the activation of the kinase in a calcium-dependent manner. May function as a positive regulator of salt or drought responses. This Arabidopsis thaliana (Mouse-ear cress) protein is Calcineurin B-like protein 5 (CBL5).